Here is a 135-residue protein sequence, read N- to C-terminus: Methylglyoxal synthase (135 aa).

The region spanning 1–135 is the MGS-like domain; it reads MQKTLALVAH…GLYERAVPEF (135 aa). Substrate contacts are provided by residues His-10, Lys-14, 36 to 39, and 56 to 57; these read TGTT and SG. The active-site Proton donor/acceptor is the Asp-62. His-89 is a substrate binding site.

This sequence belongs to the methylglyoxal synthase family.

The catalysed reaction is dihydroxyacetone phosphate = methylglyoxal + phosphate. In terms of biological role, catalyzes the formation of methylglyoxal from dihydroxyacetone phosphate. The polypeptide is Methylglyoxal synthase (Pseudoalteromonas atlantica (strain T6c / ATCC BAA-1087)).